The following is a 146-amino-acid chain: Basic phospholipase A2 (146 aa).

A signal peptide spans 1-21 (MYPAHLLVLLAVCVSLLGAAS). Residues 22–27 (IPPLPL) constitute a propeptide that is removed on maturation. 7 cysteine pairs are disulfide-bonded: Cys-38/Cys-98, Cys-54/Cys-145, Cys-56/Cys-72, Cys-71/Cys-126, Cys-78/Cys-119, Cys-87/Cys-112, and Cys-105/Cys-117. 3 residues coordinate Ca(2+): Tyr-55, Gly-57, and Gly-59. His-75 is a catalytic residue. Asp-76 lines the Ca(2+) pocket. The active site involves Asp-120.

Belongs to the phospholipase A2 family. Group I subfamily. D49 sub-subfamily. It depends on Ca(2+) as a cofactor. As to expression, expressed by the venom gland.

It localises to the secreted. It catalyses the reaction a 1,2-diacyl-sn-glycero-3-phosphocholine + H2O = a 1-acyl-sn-glycero-3-phosphocholine + a fatty acid + H(+). Its function is as follows. Snake venom phospholipase A2 (PLA2) that inhibits neuromuscular transmission by blocking acetylcholine release from the nerve termini. PLA2 catalyzes the calcium-dependent hydrolysis of the 2-acyl groups in 3-sn-phosphoglycerides. The chain is Basic phospholipase A2 from Hydrophis hardwickii (Hardwick's spine-bellied seasnake).